A 186-amino-acid polypeptide reads, in one-letter code: NADH-quinone oxidoreductase subunit C (186 aa).

The segment at 166–186 (DSLTPWKGVGRPSDPFDGRKE) is disordered.

It belongs to the complex I 30 kDa subunit family. As to quaternary structure, NDH-1 is composed of 14 different subunits. Subunits NuoB, C, D, E, F, and G constitute the peripheral sector of the complex.

The protein resides in the cell inner membrane. The catalysed reaction is a quinone + NADH + 5 H(+)(in) = a quinol + NAD(+) + 4 H(+)(out). NDH-1 shuttles electrons from NADH, via FMN and iron-sulfur (Fe-S) centers, to quinones in the respiratory chain. The immediate electron acceptor for the enzyme in this species is believed to be ubiquinone. Couples the redox reaction to proton translocation (for every two electrons transferred, four hydrogen ions are translocated across the cytoplasmic membrane), and thus conserves the redox energy in a proton gradient. The polypeptide is NADH-quinone oxidoreductase subunit C (Neorickettsia sennetsu (strain ATCC VR-367 / Miyayama) (Ehrlichia sennetsu)).